Consider the following 445-residue polypeptide: UPF0210 protein STK_02450 (445 aa).

The protein belongs to the UPF0210 family.

The protein is UPF0210 protein STK_02450 of Sulfurisphaera tokodaii (strain DSM 16993 / JCM 10545 / NBRC 100140 / 7) (Sulfolobus tokodaii).